Here is a 530-residue protein sequence, read N- to C-terminus: MRFSGRFKGYNLQKFQKDLIAGIVVGVVAIPLGMAFAIASGVEPEYGLYTVVIAGICISLFGGSKYQIGGPTGAFVPILFGIIMQYGLENLLIAGFMAGVMLVLFGLFKLGKIMKFVPKPVIVGFTAGIAVLIFTEQIANFLGLRNVEKHENFHHNMFEIVQQLGTFNVYAILTAVIGLVILLVSAKVMPKVPGALLALLISTVVAVVFFPDRMATIGSTYGEIPRHLPEFQFPELTLDKMVMLFPAALVIALLGGLESILSAMVADNMKGSKHDSNKELVGQGIANMAAPLFGGIPATGAIARTATNIKNGAVSPVSGVVHGVVVLLVLLVFAPYASHVPLASMAPILMVVAWNMSERKEVANMLRLKNADSFILAATFALTVLFDLIIGVATGLLLAFVFFIRRMSEATRIHNQETHPVLAKREDPSVSMYAIEGPLFFGSIDSLESSLLEHVQKKPKTLILLMNKVHYMDTSAEAVLGNIMNRIKRHNGKLMIVGLQSQPKELLHKTGLFHKIGKQHFFDHHDEITG.

10 helical membrane-spanning segments follow: residues 19–39 (LIAGIVVGVVAIPLGMAFAIA), 41–61 (GVEPEYGLYTVVIAGICISLF), 68–88 (IGGPTGAFVPILFGIIMQYGL), 91–111 (LLIAGFMAGVMLVLFGLFKLG), 121–141 (VIVGFTAGIAVLIFTEQIANF), 164–184 (LGTFNVYAILTAVIGLVILLV), 192–212 (VPGALLALLISTVVAVVFFPD), 241–261 (MVMLFPAALVIALLGGLESIL), 313–333 (AVSPVSGVVHGVVVLLVLLVF), and 384–404 (VLFDLIIGVATGLLLAFVFFI). An STAS domain is found at 420-530 (PVLAKREDPS…FFDHHDEITG (111 aa)).

It belongs to the SLC26A/SulP transporter (TC 2.A.53) family.

The protein localises to the cell membrane. This is Putative sulfate transporter YvdB (yvdB) from Bacillus subtilis (strain 168).